The following is a 77-amino-acid chain: Neurotoxin LmNaTx21.1 (77 aa).

The first 7 residues, 1 to 7 (LILVACL), serve as a signal peptide directing secretion. Positions 16-76 (KDGYPVDWNN…VEIKGYGRCR (61 aa)) constitute an LCN-type CS-alpha/beta domain. Disulfide bonds link cysteine 26-cysteine 75, cysteine 30-cysteine 51, cysteine 37-cysteine 58, and cysteine 41-cysteine 60.

This sequence belongs to the long (4 C-C) scorpion toxin superfamily. Sodium channel inhibitor family. Alpha subfamily. In terms of tissue distribution, expressed by the venom gland.

Its subcellular location is the secreted. Binds voltage-independently at site-3 of voltage-gated sodium channels (Nav) and inhibits the inactivation of the activated channels, thereby blocking neuronal transmission. The polypeptide is Neurotoxin LmNaTx21.1 (Lychas mucronatus (Chinese swimming scorpion)).